Reading from the N-terminus, the 224-residue chain is UPF0441 protein ECA0329 (224 aa).

A disordered region spans residues 180–224; it reads TALAPKPATTSTITRGGFGETVAKQNSMQRSSASSNSSSSRSMGG. Low complexity predominate over residues 204-224; that stretch reads QNSMQRSSASSNSSSSRSMGG.

This sequence belongs to the UPF0441 family.

The chain is UPF0441 protein ECA0329 from Pectobacterium atrosepticum (strain SCRI 1043 / ATCC BAA-672) (Erwinia carotovora subsp. atroseptica).